A 297-amino-acid chain; its full sequence is Haloalkane dehalogenase (297 aa).

Residues 47–148 form the AB hydrolase-1 domain; that stretch reads PPIVLLHGEP…AIARLVVANG (102 aa). The Nucleophile role is filled by Asp123. Catalysis depends on Asp250, which acts as the Proton donor. His279 acts as the Proton acceptor in catalysis.

This sequence belongs to the haloalkane dehalogenase family. Type 1 subfamily. Monomer.

It carries out the reaction 1-haloalkane + H2O = a halide anion + a primary alcohol + H(+). Its function is as follows. Catalyzes hydrolytic cleavage of carbon-halogen bonds in halogenated aliphatic compounds, leading to the formation of the corresponding primary alcohols, halide ions and protons. In Mycobacterium marinum (strain ATCC BAA-535 / M), this protein is Haloalkane dehalogenase.